Here is a 264-residue protein sequence, read N- to C-terminus: Acyl-[acyl-carrier-protein]--UDP-N-acetylglucosamine O-acyltransferase (264 aa).

This sequence belongs to the transferase hexapeptide repeat family. LpxA subfamily. In terms of assembly, homotrimer.

The protein resides in the cytoplasm. The enzyme catalyses a (3R)-hydroxyacyl-[ACP] + UDP-N-acetyl-alpha-D-glucosamine = a UDP-3-O-[(3R)-3-hydroxyacyl]-N-acetyl-alpha-D-glucosamine + holo-[ACP]. It participates in glycolipid biosynthesis; lipid IV(A) biosynthesis; lipid IV(A) from (3R)-3-hydroxytetradecanoyl-[acyl-carrier-protein] and UDP-N-acetyl-alpha-D-glucosamine: step 1/6. Functionally, involved in the biosynthesis of lipid A, a phosphorylated glycolipid that anchors the lipopolysaccharide to the outer membrane of the cell. The chain is Acyl-[acyl-carrier-protein]--UDP-N-acetylglucosamine O-acyltransferase from Rickettsia prowazekii (strain Madrid E).